The following is a 336-amino-acid chain: Effector SCP41 (336 aa).

Positions 1-19 (MRTETASLLLLAALSVAEE) are cleaved as a signal peptide. Disordered stretches follow at residues 59–99 (LFSP…STNN) and 189–230 (PVGN…GQKG). Over residues 63–74 (QQQQQQQQQQQQ) the composition is skewed to low complexity.

In terms of assembly, interacts with A.thaliana CBP60G; the interaction is direct. Interacts with A.thaliana SARD1. Interacts with G.hirsutum CBP60B.

Its subcellular location is the secreted. It localises to the host nucleus. Its function is as follows. Effector that binds transcription regulators in the host plant to suppress the host's innate immune response. Inhibits the host plant transcription regulators CBP60G and SARD1. This chain is Effector SCP41, found in Verticillium dahliae (strain VdLs.17 / ATCC MYA-4575 / FGSC 10137) (Verticillium wilt).